We begin with the raw amino-acid sequence, 184 residues long: Large ribosomal subunit protein uL6 (184 aa).

The protein belongs to the universal ribosomal protein uL6 family. As to quaternary structure, part of the 50S ribosomal subunit.

Functionally, this protein binds to the 23S rRNA, and is important in its secondary structure. It is located near the subunit interface in the base of the L7/L12 stalk, and near the tRNA binding site of the peptidyltransferase center. The polypeptide is Large ribosomal subunit protein uL6 (Thermotoga maritima (strain ATCC 43589 / DSM 3109 / JCM 10099 / NBRC 100826 / MSB8)).